The following is a 172-amino-acid chain: B-box zinc finger protein 18 (172 aa).

8 residues coordinate Zn(2+): cysteine 5, cysteine 8, cysteine 28, histidine 33, cysteine 56, cysteine 59, cysteine 79, and histidine 84. The B box-type 1; atypical zinc finger occupies 5-47 (CDACESAAAIVFCAADEAALCCSCDEKVHKCNKLASRHLRVGL). Residues 56–96 (CDICENAPAFFYCEIDGSSLCLQCDMVVHVGGKRTHRRFLL) form a B box-type 2; atypical zinc finger. Residues 119–172 (QKASSGRGQESNGNGDHDHNMIDLNSNPQRVHEPGSHNQEEGIDVNNANNHEHE) form a disordered region. A compositionally biased stretch (polar residues) spans 120–132 (KASSGRGQESNGN). Basic and acidic residues predominate over residues 148 to 158 (RVHEPGSHNQE).

Expressed in vasculature of leaves and petioles.

The protein localises to the nucleus. Its function is as follows. Acts as a negative regulator of seedling photomorphogenesis. Acts as a negative regulator of blue light-mediated inhibition of hypocotyl elongation through increase of bioactive gibberellin levels. Acts as a repressor of thermotolerance by modulating expression of a set of heat shock-responsive genes. This is B-box zinc finger protein 18 from Arabidopsis thaliana (Mouse-ear cress).